A 190-amino-acid chain; its full sequence is Peptidoglycan recognition protein 1 (190 aa).

Positions 1 to 21 (MSRRYTPLAWVLLALLGLGAA) are cleaved as a signal peptide. Glutamine 22 is modified (pyrrolidone carboxylic acid). Disulfide bonds link cysteine 24–cysteine 148, cysteine 40–cysteine 85, and cysteine 61–cysteine 67. In terms of domain architecture, N-acetylmuramoyl-L-alanine amidase spans 46–174 (QPVRYVVVSH…RDVQQTLSPG (129 aa)).

The protein belongs to the N-acetylmuramoyl-L-alanine amidase 2 family. As to quaternary structure, homodimer; disulfide-linked. In terms of tissue distribution, synthesized only in bone marrow. The mature protein is stored in the cytoplasmic granules of eosinophils and neutrophils but is absent from monocytes, lymphocytes, or platelets.

It is found in the secreted. The protein resides in the cytoplasmic granule. In terms of biological role, innate immunity protein that plays several important functions in antimicrobial and antitumor defense systems. Acts as a pattern receptor that binds to murein peptidoglycans (PGN) of Gram-positive bacteria and thus provides bactericidal activity. Forms an equimolar complex with heat shock protein HSPA1A and induces programmed cell death through apoptosis and necroptosis in tumor cell lines by activating the TNFR1 receptor on the target cell membrane. In addition, acts in complex with the Ca(2+)-binding protein S100A4 as a chemoattractant able to induce lymphocyte movement. Mechanistically, this complex acts as a ligand of the chemotactic receptors CCR5 and CXCR3 which are present on the cells of the immune system. Also promotes the activation of lymphocytes that become able to kill virus-infected cells as well as tumor cells by modulating the spectrum of their target-cell specificity. Induction of cytotoxicity on monocyte surface requires interaction with TREM1 receptor. This Bos taurus (Bovine) protein is Peptidoglycan recognition protein 1 (PGLYRP1).